A 371-amino-acid chain; its full sequence is Putative ribonuclease 3 (371 aa).

The region spanning 10-136 (AKSVKDKYIP…FLGAVCMAVD (127 aa)) is the RNase III domain.

This sequence belongs to the IIV-6 142R family.

It catalyses the reaction Endonucleolytic cleavage to 5'-phosphomonoester.. In terms of biological role, digests double-stranded RNA. In Frog virus 3 (isolate Goorha) (FV-3), this protein is Putative ribonuclease 3.